Consider the following 122-residue polypeptide: MVSKKSRTVVREQKHRRLRNRFSGTAERPRLAVFRSNNHMYAQIIDDTVGKTLVSASTLDKEVKAELEKTNNVEAAAAVGTVVAKRALEKGIKTVVYDRGGFIYAGKIKALAEAAREAGLEF.

The protein belongs to the universal ribosomal protein uL18 family. As to quaternary structure, part of the 50S ribosomal subunit; part of the 5S rRNA/L5/L18/L25 subcomplex. Contacts the 5S and 23S rRNAs.

This is one of the proteins that bind and probably mediate the attachment of the 5S RNA into the large ribosomal subunit, where it forms part of the central protuberance. This Lachnospira eligens (strain ATCC 27750 / DSM 3376 / VPI C15-48 / C15-B4) (Eubacterium eligens) protein is Large ribosomal subunit protein uL18.